The primary structure comprises 70 residues: DNA-directed RNA polymerase subunit omega (70 aa).

It belongs to the RNA polymerase subunit omega family. The RNAP catalytic core consists of 2 alpha, 1 beta, 1 beta' and 1 omega subunit. When a sigma factor is associated with the core the holoenzyme is formed, which can initiate transcription.

It carries out the reaction RNA(n) + a ribonucleoside 5'-triphosphate = RNA(n+1) + diphosphate. Functionally, promotes RNA polymerase assembly. Latches the N- and C-terminal regions of the beta' subunit thereby facilitating its interaction with the beta and alpha subunits. The protein is DNA-directed RNA polymerase subunit omega of Bacillus anthracis.